Reading from the N-terminus, the 873-residue chain is MGTVTPMMQQYLDIKEQYKDCILFFRLGDFYEMFFSDAELASRELEITLTGRDCGLEERAPMCGVPFHAADNYIARLVSKGYKVAICEQVEDPALAKGIVKRDVVKVVTPGTVTDITMLDERKNNYLMSVYKNGNFYGLASVDITTGDFYATRITWGNTRGKLLDEIAKYLPSEIIVNNELNSDNELTSEIKQRFNTYVSTFEETSFEYGNSMDILANHFEKQTLNIQEYDIAVNASGALLKYLESTQKVNLSHIQKFNSYALEEYMILDASSRRNLELTETMREKSKKGSLLWVLDKTMTSMGGRLLRKWIEQPLINHGDISLRLDAVEELKNKFMVRVEARELLKRVYDIERLMGKVVLGSVNCRDLIALKNSMCQIPYIKSLLNGFEAEYIKNCGEQLDCLEDVCNLIEVSIIDEPPVTIKEGGIIKDGYNPEVDKLRMASIQGKDWIAALEASQREKTGIKNLKVGFNRVFGYYIEVTKSYFSLVPEEYIRKQTLSNCERYITPELKEIEDTILGAEEKIIQLEYSLFVEIKEKIAEQLSRIKSTARALAEIDVLASLAEVADREGYCKPEVSLSDKIEIIEGRHPVVEKMTDKSGFVPNDTVLDMEEDRLAIITGPNMAGKSTYMRQTALIVLMAQIGSFVPAATAKIGLVDRIFTRVGASDDLASGQSTFMVEMSEVANILINATKRSLLVLDEIGRGTSTFDGLSIAWAVIEYIVNKEQLGCRTLFATHYHELTELEGKLPGIKNYCITVKEKGEDVIFLRKIIRGGADGSYGIQVAKLAGVPQSVIDRAKEILSNLDDADINRSGKARRIKKQVDGQLDLFAQAAKASADAEILEEIRKIDISRLTPIDSMNILYELQRKMNNRE.

Position 620 to 627 (620 to 627 (GPNMAGKS)) interacts with ATP.

This sequence belongs to the DNA mismatch repair MutS family.

In terms of biological role, this protein is involved in the repair of mismatches in DNA. It is possible that it carries out the mismatch recognition step. This protein has a weak ATPase activity. This Ruminiclostridium cellulolyticum (strain ATCC 35319 / DSM 5812 / JCM 6584 / H10) (Clostridium cellulolyticum) protein is DNA mismatch repair protein MutS.